Reading from the N-terminus, the 76-residue chain is Defensin-like protein 5 (76 aa).

The first 29 residues, 1 to 29 (MKVSPRLNSALLLLFMILATVMGLVTVEA), serve as a signal peptide directing secretion. 4 disulfide bridges follow: Cys32/Cys76, Cys43/Cys63, Cys49/Cys70, and Cys53/Cys72.

The protein belongs to the DEFL family.

The protein resides in the secreted. In terms of biological role, confers broad-spectrum resistance to pathogens. The protein is Defensin-like protein 5 (PDF2.4) of Arabidopsis thaliana (Mouse-ear cress).